We begin with the raw amino-acid sequence, 288 residues long: Diaminopimelate epimerase (288 aa).

Residues Asn-14 and Asn-67 each coordinate substrate. Residue Cys-76 is the Proton donor of the active site. Substrate-binding positions include 77–78, Asn-166, Asn-199, and 217–218; these read GN and ER. The Proton acceptor role is filled by Cys-226. Residue 227–228 coordinates substrate; the sequence is GT.

This sequence belongs to the diaminopimelate epimerase family. In terms of assembly, homodimer.

It is found in the cytoplasm. It catalyses the reaction (2S,6S)-2,6-diaminopimelate = meso-2,6-diaminopimelate. Its pathway is amino-acid biosynthesis; L-lysine biosynthesis via DAP pathway; DL-2,6-diaminopimelate from LL-2,6-diaminopimelate: step 1/1. Functionally, catalyzes the stereoinversion of LL-2,6-diaminopimelate (L,L-DAP) to meso-diaminopimelate (meso-DAP), a precursor of L-lysine and an essential component of the bacterial peptidoglycan. In Bacillus cereus (strain B4264), this protein is Diaminopimelate epimerase.